A 1183-amino-acid polypeptide reads, in one-letter code: DNA-directed RNA polymerase subunit beta (1183 aa).

Acidic residues predominate over residues 1151–1162 (EIEMADVDDEDA). Positions 1151–1183 (EIEMADVDDEDAAERKVDLQQKSAPESQKETTD) are disordered.

This sequence belongs to the RNA polymerase beta chain family. As to quaternary structure, the RNAP catalytic core consists of 2 alpha, 1 beta, 1 beta' and 1 omega subunit. When a sigma factor is associated with the core the holoenzyme is formed, which can initiate transcription.

The enzyme catalyses RNA(n) + a ribonucleoside 5'-triphosphate = RNA(n+1) + diphosphate. In terms of biological role, DNA-dependent RNA polymerase catalyzes the transcription of DNA into RNA using the four ribonucleoside triphosphates as substrates. This Staphylococcus epidermidis (strain ATCC 12228 / FDA PCI 1200) protein is DNA-directed RNA polymerase subunit beta.